The chain runs to 153 residues: Riboflavin synthase (153 aa).

Belongs to the DMRL synthase family. As to quaternary structure, homooligomer. The cofactor is Mg(2+).

The catalysed reaction is 2 6,7-dimethyl-8-(1-D-ribityl)lumazine + H(+) = 5-amino-6-(D-ribitylamino)uracil + riboflavin. It functions in the pathway cofactor biosynthesis; riboflavin biosynthesis; riboflavin from 2-hydroxy-3-oxobutyl phosphate and 5-amino-6-(D-ribitylamino)uracil: step 2/2. Its activity is regulated as follows. Inhibited by EDTA. Its function is as follows. The relatively low activity of this enzyme suggested that 6,7-dimethyl-8-ribityllumazine might not be its natural substrate. The polypeptide is Riboflavin synthase (ribC) (Methanothermobacter marburgensis (strain ATCC BAA-927 / DSM 2133 / JCM 14651 / NBRC 100331 / OCM 82 / Marburg) (Methanobacterium thermoautotrophicum)).